The following is a 310-amino-acid chain: MAFPRVRLVVTADDFGYCPRRDEGIVEAFLAGTVTSVSLLVNGTAAESAAELARRHSIPTGLHANLSEGRPVGPARHNASSLLSPEGFFLGKMGFREALAAGDVALPQVREELEAQLSRFRELLGRSPTHVDGHQHVHVLPGVCQVFAEALQAYGVRFTRLPAERGVGSCAWLEAPARAFACTVERDARAAIGPFSRHGLRWTDAFVGLSTCGRHMSAHRVLGSLARALEDIPAGHALTAELMAHPGYPSVPPAGGCGEGPDAFSCSWERLHELHVLTAPTLRAWLAQNGVQLCAIDDLDSKRPGEGVPL.

Residue aspartate 13 is the Proton acceptor of the active site. 2 residues coordinate Mg(2+): aspartate 14 and histidine 134.

The protein belongs to the YdjC deacetylase family. It depends on Mg(2+) as a cofactor.

Probably catalyzes the deacetylation of acetylated carbohydrates an important step in the degradation of oligosaccharides. This is Carbohydrate deacetylase (Ydjc) from Mus musculus (Mouse).